The sequence spans 323 residues: uncharacterized protein (323 aa).

Disordered stretches follow at residues Ala185–Trp214 and Gly271–Leu294.

This sequence belongs to the IGBP1/TAP42 family.

This is an uncharacterized protein from Schizosaccharomyces pombe (strain 972 / ATCC 24843) (Fission yeast).